The chain runs to 137 residues: Ig heavy chain V region MOPC 315 (137 aa).

The signal sequence occupies residues 1-18 (MKVLSLLYLLTAIPGIMS). The segment at 19 to 48 (DVQLQESGPGLVKPSQSLSLTCSVTGYSIT) is framework-1. C40 and C114 are oxidised to a cystine. The segment at 49 to 54 (SGYFWN) is complementarity-determining-1. A framework-2 region spans residues 55–68 (WIRQFPGNKLEWLG). A complementarity-determining-2 region spans residues 69-84 (FIKYDGSNGYNPSLKN). Residues 85–116 (RVSITRDTSENQFFLKLNSVTTEDTATYYCAG) are framework-3. The tract at residues 117-126 (DNDHLYYFDY) is complementarity-determining-3. Residues 127–137 (WGQGTTLTVSS) form a framework-4 region.

This Mus musculus (Mouse) protein is Ig heavy chain V region MOPC 315.